A 251-amino-acid polypeptide reads, in one-letter code: HTH-type transcriptional regulator IolR (251 aa).

Positions 1 to 57 (MKLMRIQEMEEYILSHGTVSLDELCQVFNVSKNTVRRDINKLTEKGAIEKVYGGVTS) constitute an HTH deoR-type domain. A DNA-binding region (H-T-H motif) is located at residues 19–38 (VSLDELCQVFNVSKNTVRRD).

Functionally, iol operon repressor. This Bacillus subtilis (strain 168) protein is HTH-type transcriptional regulator IolR (iolR).